A 228-amino-acid polypeptide reads, in one-letter code: 2,3-bisphosphoglycerate-dependent phosphoglycerate mutase (228 aa).

Residues 8-15 (RHGQSVWN), 21-22 (TG), arginine 60, 87-90 (ERHY), lysine 98, 114-115 (RR), and 183-184 (GN) contribute to the substrate site. Histidine 9 serves as the catalytic Tele-phosphohistidine intermediate. Glutamate 87 (proton donor/acceptor) is an active-site residue.

It belongs to the phosphoglycerate mutase family. BPG-dependent PGAM subfamily. Homodimer.

The catalysed reaction is (2R)-2-phosphoglycerate = (2R)-3-phosphoglycerate. Its pathway is carbohydrate degradation; glycolysis; pyruvate from D-glyceraldehyde 3-phosphate: step 3/5. In terms of biological role, catalyzes the interconversion of 2-phosphoglycerate and 3-phosphoglycerate. This is 2,3-bisphosphoglycerate-dependent phosphoglycerate mutase from Rhodospirillum centenum (strain ATCC 51521 / SW).